A 546-amino-acid chain; its full sequence is Chaperonin GroEL (546 aa).

ATP is bound by residues 29-32 (TMGP), K50, 86-90 (DGTTT), G412, 476-478 (NAA), and D492.

Belongs to the chaperonin (HSP60) family. Forms a cylinder of 14 subunits composed of two heptameric rings stacked back-to-back. Interacts with the co-chaperonin GroES.

It is found in the cytoplasm. The enzyme catalyses ATP + H2O + a folded polypeptide = ADP + phosphate + an unfolded polypeptide.. In terms of biological role, together with its co-chaperonin GroES, plays an essential role in assisting protein folding. The GroEL-GroES system forms a nano-cage that allows encapsulation of the non-native substrate proteins and provides a physical environment optimized to promote and accelerate protein folding. Its function is as follows. May play a protective role against the defense mechanisms generated by the infected macrophages. In Legionella micdadei (Tatlockia micdadei), this protein is Chaperonin GroEL.